A 458-amino-acid polypeptide reads, in one-letter code: Ammonium transporter Rh type B (458 aa).

Over 1-13 (MAGSSRRAGGRRL) the chain is Cytoplasmic. The chain crosses the membrane as a helical span at residues 14–34 (QLPLLCLLLQGATAILFAVFV). At 35–61 (RYNHETDAALWHWGNHSNPDNEFYFRY) the chain is on the extracellular side. The N-linked (GlcNAc...) asparagine glycan is linked to N49. A helical membrane pass occupies residues 62 to 82 (PSFQDVHTMIFVGFGFLMAFL). Topologically, residues 83–86 (QRYG) are cytoplasmic. The chain crosses the membrane as a helical span at residues 87–107 (FSSVGFTFLLAAFALQWSTLV). The Extracellular portion of the chain corresponds to 108–124 (QGFLHTFHGGHIHIGVE). A helical membrane pass occupies residues 125 to 145 (SMINADFCAGAVLISFGAILG). Over 146-149 (KTGP) the chain is Cytoplasmic. The helical transmembrane segment at 150-170 (AQLLLMALLEVVLFGLNEFVL) threads the bilayer. The Extracellular portion of the chain corresponds to 171–178 (LSLLGVKD). A helical membrane pass occupies residues 179 to 201 (AGGSMTIHTFGAYFGLVLSRVLY). The Cytoplasmic segment spans residues 202–219 (RPQLEKSKHRQSSVYHSD). The helical transmembrane segment at 220–240 (LFAMIGTIFLWIFWPSFNSAP) threads the bilayer. The Extracellular segment spans residues 241 to 251 (TPLGDGQHRTA). Residues 252–272 (LNTYYSLTASTLSTFALSALV) traverse the membrane as a helical segment. Topologically, residues 273-282 (GRDGRLDMVH) are cytoplasmic. A helical transmembrane segment spans residues 283-303 (VQNAALAGGVVVGTSAEMMLT). Position 304 (P304) is a topological domain, extracellular. The chain crosses the membrane as a helical span at residues 305 to 325 (FGALAAGFLAGTVSTLGFKFF). Topologically, residues 326-346 (TPILESKFKIQDTCGVHNLHG) are cytoplasmic. Residues 347 to 367 (MPGVLGALLGVLVAGLATHDS) traverse the membrane as a helical segment. Residues 368 to 393 (YGEGLESVFPLIAEGQRSSTSQALHQ) are Extracellular-facing. A helical membrane pass occupies residues 394–414 (LFGLFVTLIFASVGGGLGGLL). Residues 415–458 (LRLPFLDSPPDSQCYEDQIYWEVPEEHADLAQGSLRPEEPDTQA) lie on the Cytoplasmic side of the membrane. The segment at 416 to 424 (RLPFLDSPP) is interaction with ANK3. A Basolateral sorting signal motif is present at residues 429 to 432 (YEDQ).

This sequence belongs to the ammonium transporter (TC 2.A.49) family. Rh subfamily. As to quaternary structure, interacts (via C-terminus) with ANK2 and ANK3; required for targeting to the basolateral membrane. N-glycosylated.

The protein resides in the cell membrane. Its subcellular location is the basolateral cell membrane. It carries out the reaction NH4(+)(in) = NH4(+)(out). The catalysed reaction is methylamine(out) = methylamine(in). The enzyme catalyses CO2(out) = CO2(in). In terms of biological role, ammonium transporter involved in the maintenance of acid-base homeostasis. Transports ammonium and its related derivative methylammonium across the basolateral plasma membrane of epithelial cells likely contributing to renal transepithelial ammonia transport and ammonia metabolism. May transport either NH4(+) or NH3 ammonia species predominantly mediating an electrogenic NH4(+) transport. May act as a CO2 channel providing for renal acid secretion. This chain is Ammonium transporter Rh type B (RHBG), found in Sus scrofa (Pig).